Consider the following 439-residue polypeptide: Glucose-6-phosphate 1-dehydrogenase (439 aa).

Position 100 (K100) interacts with NADP(+). 4 residues coordinate substrate: H130, K134, E168, and D187. H192 acts as the Proton acceptor in catalysis. A substrate-binding site is contributed by K288.

It belongs to the glucose-6-phosphate dehydrogenase family.

The catalysed reaction is D-glucose 6-phosphate + NADP(+) = 6-phospho-D-glucono-1,5-lactone + NADPH + H(+). It participates in carbohydrate degradation; pentose phosphate pathway; D-ribulose 5-phosphate from D-glucose 6-phosphate (oxidative stage): step 1/3. Its function is as follows. Catalyzes the oxidation of glucose 6-phosphate to 6-phosphogluconolactone. The sequence is that of Glucose-6-phosphate 1-dehydrogenase from Chlamydia trachomatis serovar D (strain ATCC VR-885 / DSM 19411 / UW-3/Cx).